The sequence spans 61 residues: Photosystem II reaction center protein K (61 aa).

The propeptide occupies 1-24; that stretch reads MLNIFSLICICLNSVLYSSSFFVA. A helical transmembrane segment spans residues 40 to 60; it reads MPVIPVLFFLLAFVWQAAVSF.

It belongs to the PsbK family. PSII is composed of 1 copy each of membrane proteins PsbA, PsbB, PsbC, PsbD, PsbE, PsbF, PsbH, PsbI, PsbJ, PsbK, PsbL, PsbM, PsbT, PsbX, PsbY, PsbZ, Psb30/Ycf12, at least 3 peripheral proteins of the oxygen-evolving complex and a large number of cofactors. It forms dimeric complexes.

Its subcellular location is the plastid. It localises to the chloroplast thylakoid membrane. Its function is as follows. One of the components of the core complex of photosystem II (PSII). PSII is a light-driven water:plastoquinone oxidoreductase that uses light energy to abstract electrons from H(2)O, generating O(2) and a proton gradient subsequently used for ATP formation. It consists of a core antenna complex that captures photons, and an electron transfer chain that converts photonic excitation into a charge separation. This Morus indica (Mulberry) protein is Photosystem II reaction center protein K.